The chain runs to 647 residues: Threonine--tRNA ligase (647 aa).

Positions 1–63 (MDKINITFPD…EEDGSIEIVT (63 aa)) constitute a TGS domain. Residues 242–540 (DHRKIGKELD…LTEETKGAFP (299 aa)) form a catalytic region. The Zn(2+) site is built by Cys336, His387, and His517.

Belongs to the class-II aminoacyl-tRNA synthetase family. As to quaternary structure, homodimer. Zn(2+) serves as cofactor.

It is found in the cytoplasm. It catalyses the reaction tRNA(Thr) + L-threonine + ATP = L-threonyl-tRNA(Thr) + AMP + diphosphate + H(+). In terms of biological role, catalyzes the attachment of threonine to tRNA(Thr) in a two-step reaction: L-threonine is first activated by ATP to form Thr-AMP and then transferred to the acceptor end of tRNA(Thr). Also edits incorrectly charged L-seryl-tRNA(Thr). This is Threonine--tRNA ligase from Staphylococcus carnosus (strain TM300).